Reading from the N-terminus, the 1250-residue chain is Protein suppressor of variegation 3-7 (1250 aa).

2 disordered regions span residues 107–148 (LNNP…HSYH) and 160–186 (HDPG…GGMR). Polar residues predominate over residues 132 to 141 (STKTEPSSDA). Positions 164-175 (DSQDDDDEDDES) are enriched in acidic residues. 3 positions are modified to phosphoserine: Ser-165, Ser-175, and Ser-176. C2H2-type zinc fingers lie at residues 217–236 (CLYC…IQQH), 319–343 (CRIC…TKGH), 425–446 (CTLC…TRAH), and 487–512 (CSVC…SEKH). Residues 343 to 354 (HMEALRNLDSDK) are compositionally biased toward basic and acidic residues. Residues 343 to 398 (HMEALRNLDSDKRSRKRKRSKSNSVTNSGGDEAEREKESEPEVGPEDAQDTPVVMM) are disordered. The disordered stretch occupies residues 525-564 (VGSADGRGGDNMDEEEAAASDQAQSSQTDDSEDNDDDNWS). The segment covering 543 to 552 (ASDQAQSSQT) has biased composition (low complexity). The segment covering 553-563 (DDSEDNDDDNW) has biased composition (acidic residues). The segment at 605–629 (QICKFCRVRFHNEAAKARHELSARH) adopts a C2H2-type 5 zinc-finger fold. The disordered stretch occupies residues 642–684 (KLHQGTNTQTKHNAQDDEESQEQDEEYGEEEEDAEEDSQSNFD). The segment covering 657–679 (DDEESQEQDEEYGEEEEDAEEDS) has biased composition (acidic residues). 2 C2H2-type zinc fingers span residues 737–761 (CKLC…TSRH) and 829–852 (CRVC…SRKH). The span at 851 to 860 (KHVENKERQR) shows a compositional bias: basic and acidic residues. Residues 851–915 (KHVENKERQR…PLAKRSRRSM (65 aa)) are disordered. Phosphoserine is present on residues Ser-871 and Ser-873. Residues 879-897 (DAERQESGMDKESENDMSV) show a composition bias toward basic and acidic residues. Position 975 is a phosphoserine (Ser-975). The 40-residue stretch at 987–1026 (RHVMDLFFDSISPTMKSLPPDLAAEGKSKIMQLVCSLELR) folds into the BESS domain. Low complexity predominate over residues 1032–1055 (ATTPTPATVSASSKWPSSTTVTPV). Disordered regions lie at residues 1032 to 1060 (ATTP…TPPA), 1079 to 1116 (TTPH…NGSA), 1154 to 1180 (QSRT…ADLS), and 1205 to 1236 (NTPQ…NGCQ). Polar residues-rich tracts occupy residues 1079-1091 (TTPH…QNNN) and 1104-1114 (GASSAQVTING). Residues 1206–1224 (TPQMQQPQQAQASITSSTP) are compositionally biased toward low complexity.

Interacts with Su(var)39 through the BESS domain.

The protein localises to the nucleus. Dose-limiting factor in position-effect variegation, the inactivation in some cells of a gene translocated next to heterochromatin. It could play a role in chromosome condensation. The sequence is that of Protein suppressor of variegation 3-7 (Su(var)3-7) from Drosophila melanogaster (Fruit fly).